The chain runs to 667 residues: DNA ligase (667 aa).

Residues 32 to 36 (DKDYD) and 80 to 81 (SL) contribute to the NAD(+) site. The active-site N6-AMP-lysine intermediate is Lys121. NAD(+) is bound by residues Arg143, Glu178, and Lys314. The Zn(2+) site is built by Cys407, Cys410, Cys423, and Cys429. Residues 587-667 (IVESIFKDKT…EFEKMLGRES (81 aa)) form the BRCT domain.

The protein belongs to the NAD-dependent DNA ligase family. LigA subfamily. Mg(2+) serves as cofactor. Requires Mn(2+) as cofactor.

It carries out the reaction NAD(+) + (deoxyribonucleotide)n-3'-hydroxyl + 5'-phospho-(deoxyribonucleotide)m = (deoxyribonucleotide)n+m + AMP + beta-nicotinamide D-nucleotide.. Functionally, DNA ligase that catalyzes the formation of phosphodiester linkages between 5'-phosphoryl and 3'-hydroxyl groups in double-stranded DNA using NAD as a coenzyme and as the energy source for the reaction. It is essential for DNA replication and repair of damaged DNA. The chain is DNA ligase from Clostridium botulinum (strain Alaska E43 / Type E3).